We begin with the raw amino-acid sequence, 594 residues long: Spindle pole body-associated protein CIK1 (594 aa).

The disordered stretch occupies residues 1-29 (MNNSKIPKLSFHSDPNNVTRDFPKTKRQK). The stretch at 81–360 (IERVKNNERK…VNELEKVQQE (280 aa)) forms a coiled coil.

As to quaternary structure, interacts with KAR3; the interaction is direct.

It is found in the nucleus. The protein localises to the cytoplasm. It localises to the cytoskeleton. The protein resides in the microtubule organizing center. Its subcellular location is the spindle pole body. It is found in the spindle. Together with the minus end-directed microtubule motor KAR3, involved in spindle midzone assembly, karyogamy (nuclear fusion) during mating, and with an essential function in meiosis I. To contribute to spindle midzone assembly during mitotic metaphase, the KAR3-CIK1 motor cross-links anti-parallel microtubules to align them on the spindle axis; as the motor travels polewards splayed microtubules are pulled into alignment. During the karyogamy (nuclear fusion) step of mating, KAR3-CIK1 cross-links antiparallel cytoplasmic microtubules emanating from the spindle pole bodies of mating partners; the motor activity of KAR3 creates the force that pulls the nuclei together by sliding cross-linked microtubules past one another. KAR3-CIK1 promotes microtubule shortening predominantly from the microtubule plus-end. Required for interhomolog recombination, synapsis of homologous chromosomes and establishment of a meiosis I spindle. The protein is Spindle pole body-associated protein CIK1 (CIK1) of Saccharomyces cerevisiae (strain ATCC 204508 / S288c) (Baker's yeast).